Here is a 37-residue protein sequence, read N- to C-terminus: Omega-conotoxin-like S6.7 (37 aa).

Residues 1–4 constitute a propeptide that is removed on maturation; sequence KSTS. Cystine bridges form between C5–C20, C12–C23, and C19–C32.

It belongs to the conotoxin O1 superfamily. As to expression, expressed by the venom duct.

It is found in the secreted. In terms of biological role, omega-conotoxins act at presynaptic membranes, they bind and block voltage-gated calcium channels (Cav). This toxin blocks N-, P- and Q-type calcium channels. The chain is Omega-conotoxin-like S6.7 from Conus striatus (Striated cone).